The primary structure comprises 797 residues: Kinesin-like protein Klp68D (797 aa).

Residues 19-344 (CVQVVVRCRP…LRYASRAKSI (326 aa)) form the Kinesin motor domain. 106–113 (GQTGTGKT) is a binding site for ATP. The stretch at 350–384 (KNEDPQDAKLKEYQEEIERLKRLIAPQQQQRSEKQ) forms a coiled coil. Disordered regions lie at residues 371 to 450 (RLIA…ELER), 610 to 656 (SSFP…PSSL), and 722 to 797 (ANSS…LVNK). Residues 386-396 (TIKKQRVKKPK) are compositionally biased toward basic residues. Residues 417-431 (QVDEDRDSDGDGAES) show a composition bias toward acidic residues. Residues 432–450 (ESDKENEAEVAKSNEELER) are compositionally biased toward basic and acidic residues. A coiled-coil region spans residues 432–580 (ESDKENEAEV…LVKELKRQLL (149 aa)). Positions 626-638 (GYRRPVSHPQRRR) are enriched in basic residues. The span at 782–791 (KKPASAYPKA) shows a compositional bias: low complexity.

The protein belongs to the TRAFAC class myosin-kinesin ATPase superfamily. Kinesin family. Kinesin II subfamily.

It is found in the cytoplasm. Its subcellular location is the cytoskeleton. Its function is as follows. Plus-end directed microtubule motor that may be used for anterograde axonal transport and could conceivably move cargos in fly neurons different than those moved by kinesin heavy chain or other plus-end directed motors. The sequence is that of Kinesin-like protein Klp68D from Drosophila pseudoobscura pseudoobscura (Fruit fly).